A 40-amino-acid chain; its full sequence is Chitin-binding protein 4 (40 aa).

In terms of processing, N-glycosylated.

In terms of biological role, chitin-binding protein. Has antifungal activity against C.krusei, C.albicans, C.tropicalis and C.parapsilosis. Has antinociceptive and anti-inflammatory activity in mice. The chain is Chitin-binding protein 4 from Moringa oleifera (Horseradish tree).